A 108-amino-acid chain; its full sequence is Insulin-1 (108 aa).

The N-terminal stretch at 1–24 (MALLVHFLPLLALLALWEPKPTQA) is a signal peptide. 3 disulfides stabilise this stretch: Cys-31-Cys-94, Cys-43-Cys-107, and Cys-93-Cys-98. A propeptide spans 57 to 85 (EVEDPQVEQLELGGSPGDLQTLALEVARQ) (c peptide).

It belongs to the insulin family. Heterodimer of a B chain and an A chain linked by two disulfide bonds.

Its subcellular location is the secreted. Functionally, insulin decreases blood glucose concentration. It increases cell permeability to monosaccharides, amino acids and fatty acids. It accelerates glycolysis, the pentose phosphate cycle, and glycogen synthesis in liver. The protein is Insulin-1 (Ins1) of Mus musculus (Mouse).